Reading from the N-terminus, the 372-residue chain is Alanine racemase (372 aa).

Lys48 (proton acceptor; specific for D-alanine) is an active-site residue. Residue Lys48 is modified to N6-(pyridoxal phosphate)lysine. Arg143 contacts substrate. The Proton acceptor; specific for L-alanine role is filled by Tyr268. Met316 contributes to the substrate binding site.

The protein belongs to the alanine racemase family. Pyridoxal 5'-phosphate serves as cofactor.

It catalyses the reaction L-alanine = D-alanine. It participates in amino-acid biosynthesis; D-alanine biosynthesis; D-alanine from L-alanine: step 1/1. In terms of biological role, catalyzes the interconversion of L-alanine and D-alanine. May also act on other amino acids. In Vibrio vulnificus (strain YJ016), this protein is Alanine racemase (alr).